The chain runs to 476 residues: RNA-binding protein 45 (476 aa).

The segment at 1-20 (MDEAGSSASGGGFRPGVDSL) is disordered. RRM domains follow at residues 26–106 (SRIF…IAQS) and 121–195 (TRIF…PKNK). Residue Lys-34 forms a Glycyl lysine isopeptide (Lys-Gly) (interchain with G-Cter in SUMO2) linkage. Phosphoserine occurs at positions 199 and 464. The region spanning 392–464 (ERLFIVFNPH…VRLKVMLADS (73 aa)) is the RRM 3 domain.

It is found in the cytoplasm. It localises to the nucleus. Its function is as follows. RNA-binding protein with binding specificity for poly(C). May play an important role in neural development. The protein is RNA-binding protein 45 (RBM45) of Homo sapiens (Human).